The sequence spans 245 residues: Demethylmenaquinone methyltransferase (245 aa).

S-adenosyl-L-methionine-binding positions include T62, D80, 105-106, and S122; that span reads DA.

The protein belongs to the class I-like SAM-binding methyltransferase superfamily. MenG/UbiE family.

It catalyses the reaction a 2-demethylmenaquinol + S-adenosyl-L-methionine = a menaquinol + S-adenosyl-L-homocysteine + H(+). Its pathway is quinol/quinone metabolism; menaquinone biosynthesis; menaquinol from 1,4-dihydroxy-2-naphthoate: step 2/2. Functionally, methyltransferase required for the conversion of demethylmenaquinol (DMKH2) to menaquinol (MKH2). This chain is Demethylmenaquinone methyltransferase, found in Clavibacter sepedonicus (Clavibacter michiganensis subsp. sepedonicus).